We begin with the raw amino-acid sequence, 461 residues long: NADP-specific glutamate dehydrogenase (461 aa).

The active site involves lysine 115.

Belongs to the Glu/Leu/Phe/Val dehydrogenases family. Homohexamer.

The catalysed reaction is L-glutamate + NADP(+) + H2O = 2-oxoglutarate + NH4(+) + NADPH + H(+). The polypeptide is NADP-specific glutamate dehydrogenase (GDH) (Penicillium chrysogenum (Penicillium notatum)).